The sequence spans 501 residues: Prostacyclin synthase (501 aa).

The helical transmembrane segment at 1–21 threads the bilayer; that stretch reads MSWAALLGLLAVLLLLLLLLS. Residues Arg107, Leu113, Asn288, 359–360, and Arg383 contribute to the substrate site; that span reads TR. Heme is bound at residue Cys442.

The protein belongs to the cytochrome P450 family. Heme serves as cofactor.

Its subcellular location is the endoplasmic reticulum membrane. It catalyses the reaction prostaglandin H2 = prostaglandin I2. The enzyme catalyses a hydroperoxyeicosatetraenoate = an oxoeicosatetraenoate + H2O. The catalysed reaction is (15S)-hydroperoxy-(5Z,8Z,11Z,13E)-eicosatetraenoate = 15-oxo-(5Z,8Z,11Z,13E)-eicosatetraenoate + H2O. It carries out the reaction (15S)-hydroperoxy-(5Z,8Z,11Z,13E)-eicosatetraenoate + AH2 = (15S)-hydroxy-(5Z,8Z,11Z,13E)-eicosatetraenoate + A + H2O. Catalyzes the biosynthesis and metabolism of eicosanoids. Catalyzes the isomerization of prostaglandin H2 to prostacyclin (= prostaglandin I2), a potent mediator of vasodilation and inhibitor of platelet aggregation. Additionally, displays dehydratase activity, toward hydroperoxyeicosatetraenoates (HPETEs), especially toward (15S)-hydroperoxy-(5Z,8Z,11Z,13E)-eicosatetraenoate (15(S)-HPETE). This Rattus norvegicus (Rat) protein is Prostacyclin synthase (Ptgis).